The primary structure comprises 391 residues: Elongation factor Tu (391 aa).

Positions 10–201 (KPHVNIGTIG…QVDAYIPTPV (192 aa)) constitute a tr-type G domain. The G1 stretch occupies residues 19–26 (GHVDHGKT). Position 19-26 (19-26 (GHVDHGKT)) interacts with GTP. Residue threonine 26 coordinates Mg(2+). The tract at residues 55 to 59 (GITIS) is G2. The G3 stretch occupies residues 76-79 (DCPG). GTP-binding positions include 76 to 80 (DCPGH) and 131 to 134 (NKVD). Residues 131–134 (NKVD) form a G4 region. Residues 169-171 (SAL) form a G5 region.

Belongs to the TRAFAC class translation factor GTPase superfamily. Classic translation factor GTPase family. EF-Tu/EF-1A subfamily. As to quaternary structure, monomer.

It localises to the cytoplasm. It catalyses the reaction GTP + H2O = GDP + phosphate + H(+). In terms of biological role, GTP hydrolase that promotes the GTP-dependent binding of aminoacyl-tRNA to the A-site of ribosomes during protein biosynthesis. The protein is Elongation factor Tu of Mesorhizobium japonicum (strain LMG 29417 / CECT 9101 / MAFF 303099) (Mesorhizobium loti (strain MAFF 303099)).